Here is a 295-residue protein sequence, read N- to C-terminus: Guided entry of tail-anchored proteins factor CAMLG (295 aa).

2 disordered regions span residues 1 to 73 and 127 to 148; these read MEPM…ILNP and GVEL…RGSH. Over 1 to 188 the chain is Cytoplasmic; that stretch reads MEPMPSATDG…RTTEEFDSFR (188 aa). The segment covering 15 to 24 has biased composition (polar residues); that stretch reads ATPSGLSASQ. Ser-53 bears the Phosphoserine mark. Positions 127 to 138 are enriched in basic and acidic residues; the sequence is GVELRQRNRGDL. Residues 189 to 206 form a helical membrane-spanning segment; it reads IFRLVGCALLALVVRAFV. The Lumenal segment spans residues 207–208; the sequence is CK. The cysteines at positions 207 and 283 are disulfide-linked. The helical transmembrane segment at 209-227 threads the bilayer; that stretch reads YLSIFAPFLTLQLAYMGLY. Over 228-268 the chain is Cytoplasmic; sequence KYFPKGEKKVKTTVLTAALLLSGIPAEVINRSMDTYSKMGE. Residues 269–287 form a helical membrane-spanning segment; the sequence is VFTDLCVYFFTFIFCHEVL. Residues 288–295 lie on the Lumenal side of the membrane; the sequence is EYWGPEVP.

As to quaternary structure, component of the Golgi to ER traffic (GET) complex, which is composed of GET1/WRB, CAMLG/GET2 and GET3/TRC40. Within the complex, GET1 and CAMLG form a heterotetramer which is stabilized by phosphatidylinositol binding and which binds to the GET3 homodimer. Interacts (via C-terminus) with GET1. Interacts (via N-terminus) with GET3. GET3 shows a higher affinity for CAMLG than for GET1. Interacts (via N-terminus) with TNFRSF13B/TACI (via C-terminus). As to expression, in the central nervous system, expressed in astrocytes, microglia and neurons (at protein level).

The protein localises to the endoplasmic reticulum membrane. Its function is as follows. Required for the post-translational delivery of tail-anchored (TA) proteins to the endoplasmic reticulum. Together with GET1/WRB, acts as a membrane receptor for soluble GET3/TRC40, which recognizes and selectively binds the transmembrane domain of TA proteins in the cytosol. Required for the stability of GET1. Stimulates calcium signaling in T cells through its involvement in elevation of intracellular calcium. Essential for the survival of peripheral follicular B cells. The chain is Guided entry of tail-anchored proteins factor CAMLG from Rattus norvegicus (Rat).